A 1024-amino-acid polypeptide reads, in one-letter code: Error-prone DNA polymerase (1024 aa).

The protein belongs to the DNA polymerase type-C family. DnaE2 subfamily.

The protein localises to the cytoplasm. It carries out the reaction DNA(n) + a 2'-deoxyribonucleoside 5'-triphosphate = DNA(n+1) + diphosphate. DNA polymerase involved in damage-induced mutagenesis and translesion synthesis (TLS). It is not the major replicative DNA polymerase. This is Error-prone DNA polymerase from Pseudomonas paraeruginosa (strain DSM 24068 / PA7) (Pseudomonas aeruginosa (strain PA7)).